Reading from the N-terminus, the 364-residue chain is Coproporphyrin III ferrochelatase (364 aa).

2 residues coordinate Fe-coproporphyrin III: Arg-29 and Tyr-118. Residues His-169 and Glu-250 each contribute to the Fe(2+) site.

Belongs to the ferrochelatase family.

It localises to the cytoplasm. It carries out the reaction Fe-coproporphyrin III + 2 H(+) = coproporphyrin III + Fe(2+). It functions in the pathway porphyrin-containing compound metabolism; protoheme biosynthesis. Its function is as follows. Involved in coproporphyrin-dependent heme b biosynthesis. Catalyzes the insertion of ferrous iron into coproporphyrin III to form Fe-coproporphyrin III. This Streptococcus pneumoniae (strain ATCC 700669 / Spain 23F-1) protein is Coproporphyrin III ferrochelatase.